The following is a 194-amino-acid chain: Thioredoxin O1, mitochondrial (194 aa).

The transit peptide at 1 to 42 (MKGNWSIVRKVLHRQFSTLRSSTPSSRLSTSIRPLVLAPNSI) directs the protein to the mitochondrion. A Phosphoserine modification is found at serine 75. The Thioredoxin domain occupies 89–194 (VKSEEEFINA…LKNLMEQLYK (106 aa)). Active-site nucleophile residues include cysteine 118 and cysteine 121. Cysteine 118 and cysteine 121 are joined by a disulfide.

The protein belongs to the thioredoxin family. Plant O-type subfamily.

Its subcellular location is the mitochondrion matrix. Thiol-disulfide oxidoreductase that may participate in various redox reactions. Possesses insulin disulfide bonds reducing activity. Reduced by thioredoxin reductases NTRA and NTRB. In Arabidopsis thaliana (Mouse-ear cress), this protein is Thioredoxin O1, mitochondrial.